The chain runs to 159 residues: Regulatory protein RecX (159 aa).

The protein belongs to the RecX family.

The protein resides in the cytoplasm. Functionally, modulates RecA activity. In Acinetobacter baylyi (strain ATCC 33305 / BD413 / ADP1), this protein is Regulatory protein RecX.